Here is a 246-residue protein sequence, read N- to C-terminus: tRNA (guanine-N(1)-)-methyltransferase (246 aa).

S-adenosyl-L-methionine-binding positions include glycine 112 and 131 to 136; that span reads IGDYVL.

Belongs to the RNA methyltransferase TrmD family. In terms of assembly, homodimer.

Its subcellular location is the cytoplasm. The catalysed reaction is guanosine(37) in tRNA + S-adenosyl-L-methionine = N(1)-methylguanosine(37) in tRNA + S-adenosyl-L-homocysteine + H(+). In terms of biological role, specifically methylates guanosine-37 in various tRNAs. This chain is tRNA (guanine-N(1)-)-methyltransferase, found in Fervidobacterium nodosum (strain ATCC 35602 / DSM 5306 / Rt17-B1).